A 513-amino-acid polypeptide reads, in one-letter code: ATP synthase subunit alpha (513 aa).

172–179 (GDRQTGKT) serves as a coordination point for ATP.

It belongs to the ATPase alpha/beta chains family. F-type ATPases have 2 components, CF(1) - the catalytic core - and CF(0) - the membrane proton channel. CF(1) has five subunits: alpha(3), beta(3), gamma(1), delta(1), epsilon(1). CF(0) has three main subunits: a(1), b(2) and c(9-12). The alpha and beta chains form an alternating ring which encloses part of the gamma chain. CF(1) is attached to CF(0) by a central stalk formed by the gamma and epsilon chains, while a peripheral stalk is formed by the delta and b chains.

The protein localises to the cell inner membrane. The enzyme catalyses ATP + H2O + 4 H(+)(in) = ADP + phosphate + 5 H(+)(out). Functionally, produces ATP from ADP in the presence of a proton gradient across the membrane. The alpha chain is a regulatory subunit. The sequence is that of ATP synthase subunit alpha from Gluconacetobacter diazotrophicus (strain ATCC 49037 / DSM 5601 / CCUG 37298 / CIP 103539 / LMG 7603 / PAl5).